A 37-amino-acid chain; its full sequence is Hemextin A (37 aa).

In terms of assembly, heterotetramer composed of two A and two B chains; non-covalently linked. Does not exist as a complex in the crude venom. May contain several disulfide bonds. As to expression, expressed by the venom gland.

The protein localises to the secreted. In terms of biological role, hemextin A (monomer): exhibits mild anticoagulant activity. It specifically inhibits the activation of FX (F10) by the TF-FVIIa complex (extrinsic tenase complex (ETC)) by non-competitively inhibiting the enzymatic activity of FVIIa. Its function is as follows. Hemextin AB complex: specifically inhibits the activation of FX (F10) by the TF-FVIIa complex (extrinsic tenase complex (ETC)) (IC(50)= 100 nM, Ki=25 nM) by non-competitively inhibiting the enzymatic activity of FVIIa. This chain is Hemextin A, found in Hemachatus haemachatus (Rinkhals).